The sequence spans 269 residues: Carbohydrate metabolism regulator TYE7 (269 aa).

Residues 146-178 (QPKIKQEPGTKAATKPKRRAPRKKLTESQKKAH) form a disordered region. Positions 159–168 (TKPKRRAPRK) are enriched in basic residues. Over residues 169–178 (KLTESQKKAH) the composition is skewed to basic and acidic residues. A bHLH domain is found at 173-244 (SQKKAHNKIE…EKATEYILHL (72 aa)).

In terms of assembly, efficient DNA binding requires dimerization with another bHLH protein.

It is found in the nucleus. Its function is as follows. Key transcriptional regulator of carbohydrate metabolism. Binds the promoter sequences of the glycolytic genes at the CANNTG motif and activates their expression during growth on either fermentable or non-fermentable carbon sources as well as under hypoxic growth conditions. Complete glycolytic activation by GAL4 and TYE7 is required for full virulence. Involved in biofilm formation and negatively regulates hyphal formation under hypoxia. Also controls the expression of the copper transport protein CTR1. This Candida albicans (strain SC5314 / ATCC MYA-2876) (Yeast) protein is Carbohydrate metabolism regulator TYE7 (TYE7).